The sequence spans 400 residues: Phosphoglycerate kinase (400 aa).

Residues 24 to 26 (DFN), R40, 63 to 66 (HFGR), R121, and R154 each bind substrate. Residues K205, G296, E327, and 356 to 359 (GGDS) each bind ATP.

It belongs to the phosphoglycerate kinase family. In terms of assembly, monomer.

It is found in the cytoplasm. It catalyses the reaction (2R)-3-phosphoglycerate + ATP = (2R)-3-phospho-glyceroyl phosphate + ADP. It functions in the pathway carbohydrate degradation; glycolysis; pyruvate from D-glyceraldehyde 3-phosphate: step 2/5. The chain is Phosphoglycerate kinase from Nostoc punctiforme (strain ATCC 29133 / PCC 73102).